The sequence spans 441 residues: UDP-N-acetylglucosamine--N-acetylmuramyl-(pentapeptide) pyrophosphoryl-undecaprenol N-acetylglucosamine transferase (441 aa).

Residues 28 to 30 (TGG), asparagine 140, arginine 176, serine 204, isoleucine 257, and glutamine 302 each bind UDP-N-acetyl-alpha-D-glucosamine.

This sequence belongs to the glycosyltransferase 28 family. MurG subfamily.

Its subcellular location is the cell inner membrane. It carries out the reaction di-trans,octa-cis-undecaprenyl diphospho-N-acetyl-alpha-D-muramoyl-L-alanyl-D-glutamyl-meso-2,6-diaminopimeloyl-D-alanyl-D-alanine + UDP-N-acetyl-alpha-D-glucosamine = di-trans,octa-cis-undecaprenyl diphospho-[N-acetyl-alpha-D-glucosaminyl-(1-&gt;4)]-N-acetyl-alpha-D-muramoyl-L-alanyl-D-glutamyl-meso-2,6-diaminopimeloyl-D-alanyl-D-alanine + UDP + H(+). It participates in cell wall biogenesis; peptidoglycan biosynthesis. In terms of biological role, cell wall formation. Catalyzes the transfer of a GlcNAc subunit on undecaprenyl-pyrophosphoryl-MurNAc-pentapeptide (lipid intermediate I) to form undecaprenyl-pyrophosphoryl-MurNAc-(pentapeptide)GlcNAc (lipid intermediate II). This is UDP-N-acetylglucosamine--N-acetylmuramyl-(pentapeptide) pyrophosphoryl-undecaprenol N-acetylglucosamine transferase from Xanthomonas oryzae pv. oryzae (strain MAFF 311018).